Reading from the N-terminus, the 189-residue chain is Recombination protein RecR (189 aa).

Residues 48–63 form a C4-type zinc finger; the sequence is CQTCFHLSAEPLCDIC. The Toprim domain occupies 71–165; that stretch reads QLLCVVADSR…QVSRIAYGLP (95 aa).

Belongs to the RecR family.

May play a role in DNA repair. It seems to be involved in an RecBC-independent recombinational process of DNA repair. It may act with RecF and RecO. The polypeptide is Recombination protein RecR (Prochlorococcus marinus (strain MIT 9303)).